The chain runs to 442 residues: D-serine dehydratase (442 aa).

Residue lysine 118 is modified to N6-(pyridoxal phosphate)lysine.

The protein belongs to the serine/threonine dehydratase family. DsdA subfamily. Monomer. Pyridoxal 5'-phosphate serves as cofactor.

The catalysed reaction is D-serine = pyruvate + NH4(+). This is D-serine dehydratase from Escherichia coli O6:H1 (strain CFT073 / ATCC 700928 / UPEC).